A 275-amino-acid polypeptide reads, in one-letter code: Putative ankyrin repeat protein L715 (275 aa).

ANK repeat units follow at residues 94 to 123 (NINY…DINY), 124 to 153 (NNGL…NTND), 155 to 183 (IFQL…SIDP), and 184 to 213 (IYST…SDST). The interval 253-275 (NQDESDVGDDAENDIENDIEDDN) is disordered. A compositionally biased stretch (acidic residues) spans 255-275 (DESDVGDDAENDIENDIEDDN).

This chain is Putative ankyrin repeat protein L715, found in Acanthamoeba polyphaga mimivirus (APMV).